The following is a 452-amino-acid chain: MRYLPLTDADRSAMLSVVGAGSVDELFADVPAEARLSAPIAGLPNHASEMAVERHMARLSANNVTAGSVPFFLGAGAYRHHVPATVDHMIQRGEFLTAYTPYQPEIAQGTLQVLFEFQTQVARLFGTDVANASLYDGSTACWEAIAMAGRITKRGKALLSGGLHPHYVETARTMARFTGDVLDTSAPVLTAAPDDDALVARIDGETSCVVVQYPDILGRIPDLAKIAAAAQAQGALLITVVTEPVALGVLQSPGSLGADIVVGEGQSLGVGLQFGGPYLGLFGCREKYLRQIPGRLCGETVDADGKRGFVLTLSTREQHIRREKATSNICTNSGLCALAFSIHLTLLGGSGLADMARLSHLAARKTAAALAQVSGIEVVNSHFFNEFTVALPHDARQIVRDLADRHVLGGVSLGRLYPQEAALANGMVVAATECTTDEDIAALVAALKEVLA.

It belongs to the GcvP family. N-terminal subunit subfamily. The glycine cleavage system is composed of four proteins: P, T, L and H. In this organism, the P 'protein' is a heterodimer of two subunits.

It catalyses the reaction N(6)-[(R)-lipoyl]-L-lysyl-[glycine-cleavage complex H protein] + glycine + H(+) = N(6)-[(R)-S(8)-aminomethyldihydrolipoyl]-L-lysyl-[glycine-cleavage complex H protein] + CO2. Functionally, the glycine cleavage system catalyzes the degradation of glycine. The P protein binds the alpha-amino group of glycine through its pyridoxal phosphate cofactor; CO(2) is released and the remaining methylamine moiety is then transferred to the lipoamide cofactor of the H protein. In Novosphingobium aromaticivorans (strain ATCC 700278 / DSM 12444 / CCUG 56034 / CIP 105152 / NBRC 16084 / F199), this protein is Probable glycine dehydrogenase (decarboxylating) subunit 1.